The sequence spans 148 residues: Putative pre-16S rRNA nuclease (148 aa).

The protein belongs to the YqgF nuclease family.

It is found in the cytoplasm. In terms of biological role, could be a nuclease involved in processing of the 5'-end of pre-16S rRNA. The protein is Putative pre-16S rRNA nuclease of Nitrosomonas europaea (strain ATCC 19718 / CIP 103999 / KCTC 2705 / NBRC 14298).